The chain runs to 379 residues: Cathepsin B-like protease 1 (379 aa).

A signal peptide spans 1-30; the sequence is MADSCCIRLHLLASVFLLLFSSFNLQGIAA. A propeptide spans 31–102 (activation peptide); sequence ENLSKQKLTS…PIVRHDLSLK (72 aa). Residues N32 and N69 are each glycosylated (N-linked (GlcNAc...) asparagine). 6 cysteine pairs are disulfide-bonded: C116–C165, C148–C191, C182–C236, C183–C187, C213–C240, and C222–C227. The active site involves C151. The N-linked (GlcNAc...) asparagine glycan is linked to N171. Residues H306 and N327 contribute to the active site. N330 carries N-linked (GlcNAc...) asparagine glycosylation. Residues 363-379 constitute a propeptide, removed in mature form; the sequence is NVFKGITTSDDLLVSSV.

This sequence belongs to the peptidase C1 family.

Thiol protease that plays a central role in plant programmed cell death (PCD). In addition to its role in protein degradation, may cleave and/or degrade a number of target proteins, activating signaling towards PCD. Contributes to the increase of caspase-3-like activity after UV-C-induced PCD and is required for abiotic stress-induced PCD. Functions redundantly with CATHB2 and CATHB3 in basal defense and distinct forms of plant programmed cell death (PCD). Participates in the establishment of basal resistance against the bacterial pathogen Pseudomonase syringae pv. tomato DC3000. Required for full levels of PCD during resistance (R) gene-mediated hypersensitive response (HR). Involved in the regulation of senescence, a developmental form of PCD in plants. In Arabidopsis thaliana (Mouse-ear cress), this protein is Cathepsin B-like protease 1.